The chain runs to 328 residues: L-asparaginase (328 aa).

The region spanning 1 to 320 (MKLLVLGTGG…EEIRKIMERN (320 aa)) is the Asparaginase/glutaminase domain. The active-site Nucleophile; O-isoaspartyl threonine intermediate is threonine 11. L-aspartate is bound by residues threonine 11, aspartate 53, serine 54, threonine 85, and aspartate 86. Catalysis depends on charge relay system residues threonine 85, aspartate 86, lysine 156, and tyrosine 274.

Belongs to the asparaginase 1 family. Homodimer.

It carries out the reaction L-asparagine + H2O = L-aspartate + NH4(+). Chohan et al. found that divalent metal ions and EDTA do not have any significant effect on enzyme activity, indicating that activity is independent of metal ions. In another study, Hong et al. showed that activity is enhanced by Mg(2+), significantly inhibited by Co(2+) and Ni(2+), and moderately inhibited by Ca(2+), Cu(2+) and EDTA. Unfolding studies suggest that urea cannot induce complete unfolding and inactivation of the enzyme even at a concentration 8 M. However, in the presence of 4 M guanidine hydrochloride, the enzyme structure is unfolded with complete loss of enzyme activity. Its function is as follows. Catalyzes the hydrolysis of L-asparagine into L-aspartate and ammonia. Also displays D-asparaginase activity, which is about 50% of the L-asparaginase activity. Does not exhibit glutaminase activity. This Thermococcus kodakarensis (strain ATCC BAA-918 / JCM 12380 / KOD1) (Pyrococcus kodakaraensis (strain KOD1)) protein is L-asparaginase.